The following is a 493-amino-acid chain: Glutamyl-tRNA(Gln) amidotransferase subunit A (493 aa).

Active-site charge relay system residues include Lys-79 and Ser-159. The active-site Acyl-ester intermediate is Ser-183.

The protein belongs to the amidase family. GatA subfamily. Heterotrimer of A, B and C subunits.

It carries out the reaction L-glutamyl-tRNA(Gln) + L-glutamine + ATP + H2O = L-glutaminyl-tRNA(Gln) + L-glutamate + ADP + phosphate + H(+). Its function is as follows. Allows the formation of correctly charged Gln-tRNA(Gln) through the transamidation of misacylated Glu-tRNA(Gln) in organisms which lack glutaminyl-tRNA synthetase. The reaction takes place in the presence of glutamine and ATP through an activated gamma-phospho-Glu-tRNA(Gln). In Brucella abortus (strain S19), this protein is Glutamyl-tRNA(Gln) amidotransferase subunit A.